Reading from the N-terminus, the 95-residue chain is Neutrophil antibiotic peptide NP-5 (95 aa).

The signal sequence occupies residues 1-19; the sequence is MRTLALLAAILLVTLQAQA. Positions 20 to 62 are excised as a propeptide; sequence ELHSGMADDGVDQQQPRAQDLDVAVYIKQDETSPLEVLGAKAG. Intrachain disulfides connect Cys-65–Cys-93, Cys-67–Cys-82, and Cys-72–Cys-92.

It belongs to the alpha-defensin family.

It localises to the secreted. Functionally, microbicidal activity. The polypeptide is Neutrophil antibiotic peptide NP-5 (Oryctolagus cuniculus (Rabbit)).